The primary structure comprises 190 residues: Casparian strip membrane protein 1 (190 aa).

The Cytoplasmic segment spans residues 1-24 (MKAESGSADAKLPLPPPVGRKRRG). The chain crosses the membrane as a helical span at residues 25-45 (LAILDFLLRLLAIGATLSAAI). Over 46–72 (AMGTNNETLKFFTQFFQFNARFYNLSA) the chain is Extracellular. Residues Asn51 and Asn69 are each glycosylated (N-linked (GlcNAc...) asparagine). The helical transmembrane segment at 73 to 93 (FIYFVIANATVGLYLLLSLPF) threads the bilayer. Residues 94–107 (SIFDIVRPRAAAFR) lie on the Cytoplasmic side of the membrane. A helical membrane pass occupies residues 108–128 (VLLIFFDTVMVAVCTSGAAAA). Residues 129 to 157 (TAIMYVARRGNTKTNWFSICQQFNSFCDQ) lie on the Extracellular side of the membrane. Residues 158-178 (ATGALGASFAAVVLLILLVLL) traverse the membrane as a helical segment. At 179–190 (SASTLHRQRADF) the chain is on the cytoplasmic side.

This sequence belongs to the Casparian strip membrane proteins (CASP) family. In terms of assembly, homodimer and heterodimers.

Its subcellular location is the cell membrane. Its function is as follows. Regulates membrane-cell wall junctions and localized cell wall deposition. Required for establishment of the Casparian strip membrane domain (CSD) and the subsequent formation of Casparian strips, a cell wall modification of the root endodermis that determines an apoplastic barrier between the intraorganismal apoplasm and the extraorganismal apoplasm and prevents lateral diffusion. This Pinus taeda (Loblolly pine) protein is Casparian strip membrane protein 1.